Reading from the N-terminus, the 115-residue chain is Large ribosomal subunit protein bL19 (115 aa).

This sequence belongs to the bacterial ribosomal protein bL19 family.

This protein is located at the 30S-50S ribosomal subunit interface and may play a role in the structure and function of the aminoacyl-tRNA binding site. This is Large ribosomal subunit protein bL19 from Buchnera aphidicola subsp. Cinara cedri (strain Cc).